The primary structure comprises 194 residues: MDEDGLPLMGSGIDLTKVPAIQQKRTVAFLNQFVVHTVQFLNRFSAVCEEKLADLSLRIQQIETTLNILDAKLSSIPGLEDVTVEVSPLNVTAVTNGSHSETTSEQTQQNSTQDSGAQESEAPSENVLTVAKDPRYARYLKMVQVGVPVMAIRDKMISEGLDPELLEKPDAPVPNGESERAVEESSDSDSSFSD.

Met1 is modified (N-acetylmethionine). A coiled-coil region spans residues 46-74 (AVCEEKLADLSLRIQQIETTLNILDAKLS). Disordered regions lie at residues 94-126 (VTNG…PSEN) and 158-194 (SEGL…SFSD). Low complexity predominate over residues 98–113 (SHSETTSEQTQQNSTQ). Residues 114-126 (DSGAQESEAPSEN) are compositionally biased toward polar residues.

The protein belongs to the CCDC53 family. Component of the WASH core complex also described as WASH regulatory complex (SHRC) composed of WASHC1, WASHC2, WASHC3, WASHC4 and WASHC5. The WASH core complex associates via WASHC2 with the F-actin-capping protein dimer (formed by CAPZA1, CAPZA2 or CAPZA3 and CAPZB) in a transient or substoichiometric manner which was initially described as WASH complex.

Its subcellular location is the early endosome. Its function is as follows. Acts as a component of the WASH core complex that functions as a nucleation-promoting factor (NPF) at the surface of endosomes, where it recruits and activates the Arp2/3 complex to induce actin polymerization, playing a key role in the fission of tubules that serve as transport intermediates during endosome sortingg. This is WASH complex subunit 3 from Mus musculus (Mouse).